We begin with the raw amino-acid sequence, 259 residues long: 3-deoxy-manno-octulosonate cytidylyltransferase (259 aa).

This sequence belongs to the KdsB family.

The protein localises to the cytoplasm. The enzyme catalyses 3-deoxy-alpha-D-manno-oct-2-ulosonate + CTP = CMP-3-deoxy-beta-D-manno-octulosonate + diphosphate. The protein operates within nucleotide-sugar biosynthesis; CMP-3-deoxy-D-manno-octulosonate biosynthesis; CMP-3-deoxy-D-manno-octulosonate from 3-deoxy-D-manno-octulosonate and CTP: step 1/1. It participates in bacterial outer membrane biogenesis; lipopolysaccharide biosynthesis. Activates KDO (a required 8-carbon sugar) for incorporation into bacterial lipopolysaccharide in Gram-negative bacteria. The protein is 3-deoxy-manno-octulosonate cytidylyltransferase of Actinobacillus succinogenes (strain ATCC 55618 / DSM 22257 / CCUG 43843 / 130Z).